We begin with the raw amino-acid sequence, 918 residues long: MLPKLLTSIFGSRNERLLKQYRRVVDQINALEPQFEQLGDDELRAKTEAFKQRVADGETLDQLLPEAFAVVREGSKRALKMRHFDVQLIGGMTLHNGKIGEMRTGEGKTLMATLPVYLNALAGKGVHVVTVNDYLARRDAEWMGRLYNFLGLTVGVNGPQMTREAKQAAYAADVTYGTNNEFGFDYLRDNMVTEVADRVQRSLNFAIVDEVDSILIDEARTPLIISGQAEDQTELYLRINAVAPLLKKQIGEADPRTGEGVIEAGDFTADEKTHQVVLTEAGHEHAEALLAQAGLLVEGASLYDAANITLMHHLYAALRARHLYHRDQHYVVQNGEVVIVDEFTGRLMTGRRWSDGLHQAVEAKEGVPIQAENQTLASITFQNYFRMYGKLAGMTGTADTEAYEFQEIYGLETVVIPPNKPTQRRDELDLVYKTSRERYEAVVKDIQDCYERGQPVLVGTTSIENSELISKLLEKYKLPHEVLNAKQHAREAEIIAQAGRPKAVTIATNMAGRGTDIVLGGNVEKQVQFIEADDAIPADDKLRRIQQLKDEWAGLHEQVKAAGGLRIVATERHESRRIDNQLRGRSGRQGDPGASRFYLSLEDPLMRIFAGDRVKAIMERLKMPDGEAIEAGIVSRSIEGAQRKVEARNFDIRKQLLEYDDVSNDQRKVIYQQRNDILESKELGAQIAHLRRGAMTDVVRTFVPVESVEEQWDIPGLEKVLRDEWQLDVPIAAQVDKSDAITDEDLVEMVAKTADETYAGKVALVGEEQFSGFERAVLLQSIDTHWREHLAALDYLRQGIHLRGYAQKNPKQEYKREAFELFSTLLDTVKMDVTRLLMTVRIRSTEEVTQAAEALEEKAEAISNLTYTHPTEDGGVAVEADPATEVANRMAEVPRAGRNDPCPCGSGKKYKQCHGRLA.

Residues glutamine 87, 105 to 109, and aspartate 516 each bind ATP; that span reads GEGKT. Residues cysteine 902, cysteine 904, cysteine 913, and histidine 914 each contribute to the Zn(2+) site.

It belongs to the SecA family. In terms of assembly, monomer and homodimer. Part of the essential Sec protein translocation apparatus which comprises SecA, SecYEG and auxiliary proteins SecDF-YajC and YidC. It depends on Zn(2+) as a cofactor.

It localises to the cell inner membrane. The protein localises to the cytoplasm. The enzyme catalyses ATP + H2O + cellular proteinSide 1 = ADP + phosphate + cellular proteinSide 2.. Functionally, part of the Sec protein translocase complex. Interacts with the SecYEG preprotein conducting channel. Has a central role in coupling the hydrolysis of ATP to the transfer of proteins into and across the cell membrane, serving both as a receptor for the preprotein-SecB complex and as an ATP-driven molecular motor driving the stepwise translocation of polypeptide chains across the membrane. This Methylibium petroleiphilum (strain ATCC BAA-1232 / LMG 22953 / PM1) protein is Protein translocase subunit SecA.